Here is a 1487-residue protein sequence, read N- to C-terminus: Chromosome partition protein MukB (1487 aa).

34–41 contacts ATP; the sequence is GGNGAGKS. Coiled coils occupy residues 297–426, 460–666, 781–806, 836–1111, and 1210–1266; these read SSRE…LEKA, ALKH…RLAS, RAAR…AKAA, EQAL…RTFV, and VEAI…LSNI. A flexible hinge region spans residues 667–784; the sequence is PGGSNDPRLK…VIPLFGRAAR (118 aa).

Belongs to the SMC family. MukB subfamily. In terms of assembly, homodimerization via its hinge domain. Binds to DNA via its C-terminal region. Interacts, and probably forms a ternary complex, with MukE and MukF via its C-terminal region. The complex formation is stimulated by calcium or magnesium. Interacts with tubulin-related protein FtsZ.

It localises to the cytoplasm. Its subcellular location is the nucleoid. Its function is as follows. Plays a central role in chromosome condensation, segregation and cell cycle progression. Functions as a homodimer, which is essential for chromosome partition. Involved in negative DNA supercoiling in vivo, and by this means organize and compact chromosomes. May achieve or facilitate chromosome segregation by condensation DNA from both sides of a centrally located replisome during cell division. The chain is Chromosome partition protein MukB from Vibrio vulnificus (strain YJ016).